The chain runs to 20 residues: Pregnancy-associated glycoprotein 71D (20 aa).

The N-linked (GlcNAc...) asparagine glycan is linked to N4.

This sequence belongs to the peptidase A1 family. Chorionic epithelium (trophectoderm) and placental cotyledons.

It localises to the secreted. The protein localises to the extracellular space. The protein is Pregnancy-associated glycoprotein 71D of Bison bonasus (European bison).